Reading from the N-terminus, the 550-residue chain is MSTFGYRRGLSKYESIDEDELLASLSPEELKELERELEDIEPDRNLPVGLRQKSLTEKTPTGNFSREALMAYWEKESQKLLEKERLGECGKVAEEDKEESEEELIFTESNSEVSEEVCTEDEEESQEEEEDSEEEEDSEEEEETTEATKHINGTVSYNSVNTDNSKPKTFKSQIENINLTNGNSGRTQRNSESPAAIHPCGNPTVIEDALEKIRNNDPDTTEVNLNNIENITTQTLSRFAEALKENTVVKTFSLANTHADDAAAIAIADMLKVNEHITSVNVESNFITGKGILAIMRALQHNTVLTELRFHNQRHIMGSQVEMEIVKLLKENTTLLRLGYHFELPGPRMSMTSILTRNMDKQRQKRMQEQKQQEGHDGGAALRTKVWQRGTPGSSPYASPRQSPWSSPKVSKKVHTGRSRPPSPVAPPPPPPPPPLPPHMLPPPPPPPAPPLPEKKLITRNIAEVIKQQESAQRALQNGQRKKKGKKVKKQPNNILKEIKNSLRSVQEKKMEDSSRPSTPQRSVHENLMEAIRGSSIRQLRRVEVPEALR.

The interaction with tropomyosin alpha stretch occupies residues 1-47 (MSTFGYRRGLSKYESIDEDELLASLSPEELKELERELEDIEPDRNLP). Interaction with actin regions lie at residues 1-165 (MSTF…TDNS), 166-500 (KPKT…KEIK), and 524-543 (VHEN…LRRV). 3 positions are modified to phosphoserine: Ser11, Ser15, and Ser24. Over residues 84-94 (ERLGECGKVAE) the composition is skewed to basic and acidic residues. 2 disordered regions span residues 84 to 202 (ERLG…PCGN) and 359 to 527 (MDKQ…VHEN). Residues 91–147 (KVAEEDKEESEEELIFTESNSEVSEEVCTEDEEESQEEEEDSEEEEDSEEEEETTEA) adopt a coiled-coil conformation. Acidic residues-rich tracts occupy residues 95–105 (EDKEESEEELI) and 113–145 (VSEE…EETT). 2 stretches are compositionally biased toward polar residues: residues 151-164 (INGT…NTDN) and 170-193 (FKSQ…NSES). Residues 359 to 377 (MDKQRQKRMQEQKQQEGHD) are compositionally biased toward basic and acidic residues. The span at 391 to 402 (TPGSSPYASPRQ) shows a compositional bias: polar residues. The residue at position 407 (Ser407) is a Phosphoserine. Pro residues predominate over residues 421–452 (PPSPVAPPPPPPPPPLPPHMLPPPPPPPAPPL). Residues 468–479 (QQESAQRALQNG) are compositionally biased toward polar residues. Over residues 480–490 (QRKKKGKKVKK) the composition is skewed to basic residues. Basic and acidic residues predominate over residues 497–515 (KEIKNSLRSVQEKKMEDSS). In terms of domain architecture, WH2 spans 524–543 (VHENLMEAIRGSSIRQLRRV).

It belongs to the tropomodulin family. Can bind at least three actin monomers and thereby provides a nucleus for actin filament formation. Interacts (via N-terminus) with tropomyosin alpha (TPM1) (via N-terminus). May also interact with TPM2 (via N-terminus). Interacts with FLII. As to expression, detected in neonate heart (at protein level). Detected in embryonic heart and in pharyngeal arches. Detected in adult heart.

The protein localises to the cytoplasm. Its subcellular location is the myofibril. It is found in the sarcomere. It localises to the m line. The protein resides in the cytoskeleton. Its function is as follows. Mediates nucleation of actin filaments and thereby promotes actin polymerization. Plays a role in the regulation of actin filament length. Required for normal sarcomere organization in the heart, and for normal heart function. In Mus musculus (Mouse), this protein is Leiomodin-2 (Lmod2).